The primary structure comprises 278 residues: Putative transposase for insertion sequence element IS986/IS6110 (278 aa).

One can recognise an Integrase catalytic domain in the interval 101 to 268 (GPPAPNRLWV…VPPVELEAAY (168 aa)).

In terms of biological role, involved in the transposition of the insertion sequence. The sequence is that of Putative transposase for insertion sequence element IS986/IS6110 from Mycobacterium bovis (strain ATCC BAA-935 / AF2122/97).